Here is a 186-residue protein sequence, read N- to C-terminus: Guanylate kinase (186 aa).

In terms of domain architecture, Guanylate kinase-like spans 5 to 183 (GNLTVLTGPS…AFKEIEGFMG (179 aa)). ATP is bound at residue 12 to 19 (GPSGVGKG).

This sequence belongs to the guanylate kinase family.

The protein resides in the cytoplasm. The catalysed reaction is GMP + ATP = GDP + ADP. Its function is as follows. Essential for recycling GMP and indirectly, cGMP. The polypeptide is Guanylate kinase (Prochlorococcus marinus (strain NATL2A)).